The following is a 693-amino-acid chain: Transforming growth factor beta activator LRRC33 (693 aa).

An N-terminal signal peptide occupies residues methionine 1–tryptophan 19. The Extracellular segment spans residues arginine 20 to leucine 651. The region spanning alanine 29–proline 56 is the LRRNT domain. 10 LRR repeats span residues histidine 58–alanine 79, arginine 82–glutamate 103, histidine 106–alanine 127, glycine 133–asparagine 155, serine 158–glycine 179, histidine 182–glycine 203, glutamate 206–glutamine 227, leucine 228–glutamate 239, glutamate 251–glycine 272, and lysine 273–serine 294. Asparagine 74 and asparagine 85 each carry an N-linked (GlcNAc...) asparagine glycan. Asparagine 155 carries N-linked (GlcNAc...) asparagine glycosylation. Residue asparagine 232 is glycosylated (N-linked (GlcNAc...) asparagine). Residues asparagine 292, asparagine 309, and asparagine 312 are each glycosylated (N-linked (GlcNAc...) asparagine). LRR repeat units follow at residues alanine 329 to lysine 350, serine 353 to proline 374, alanine 377 to threonine 398, asparagine 403 to asparagine 424, serine 427 to aspartate 448, serine 463 to glycine 484, serine 486 to tryptophan 507, threonine 512 to serine 533, asparagine 537 to leucine 558, alanine 559 to glutamate 580, and glycine 585 to glycine 605. Asparagine 408 and asparagine 424 each carry an N-linked (GlcNAc...) asparagine glycan. Asparagine 500 carries N-linked (GlcNAc...) asparagine glycosylation. Positions alanine 606 to tryptophan 644 constitute an LRRCT domain. Asparagine 623 is a glycosylation site (N-linked (GlcNAc...) asparagine). Residues phenylalanine 652 to phenylalanine 672 traverse the membrane as a helical segment. Residues leucine 673–tyrosine 693 lie on the Cytoplasmic side of the membrane.

Belongs to the LRRC32/LRRC33 family. Interacts with TGFB1; associates via disulfide bonds with the Latency-associated peptide chain (LAP) regulatory chain of TGFB1, leading to regulate activation of TGF-beta-1. Interacts (via LRR repeats) with TLR2, TLR3, TLR4, TLR9 and probably other Toll-like receptors. Interacts with CYBB/NOX2; the interaction is direct. In terms of processing, N-glycosylated. As to expression, mainly expressed in cells of hematopoietic origin, such as in immune organs such as lymph nodes, thymus and spleen. Among leukocytes, expressed at higher level in myeloid cell such as macrophages, neutrophils and dendritic cells. Highly expressed in central nervous system-resident macrophages, including microglia and perivascular macrophages.

It localises to the cell membrane. It is found in the endoplasmic reticulum membrane. Key regulator of transforming growth factor beta-1 (TGFB1) specifically required for microglia function in the nervous system. Required for activation of latent TGF-beta-1 in macrophages and microglia: associates specifically via disulfide bonds with the Latency-associated peptide (LAP), which is the regulatory chain of TGFB1, and regulates integrin-dependent activation of TGF-beta-1. TGF-beta-1 activation mediated by LRRC33/NRROS is highly localized: there is little spreading of TGF-beta-1 activated from one microglial cell to neighboring microglia, suggesting the existence of localized and selective activation of TGF-beta-1 by LRRC33/NRROS. Indirectly plays a role in Toll-like receptor (TLR) signaling: ability to inhibit TLR-mediated NF-kappa-B activation and cytokine production is probably a consequence of its role in TGF-beta-1 signaling. The polypeptide is Transforming growth factor beta activator LRRC33 (Mus musculus (Mouse)).